Reading from the N-terminus, the 431-residue chain is Adenylosuccinate synthetase (431 aa).

Residues 13-19 (GDEGKGK) and 41-43 (GHT) each bind GTP. The Proton acceptor role is filled by Asp-14. Residues Asp-14 and Gly-41 each coordinate Mg(2+). IMP is bound by residues 14–17 (DEGK), 39–42 (NAGH), Thr-130, Arg-144, Gln-225, Thr-240, and Arg-304. His-42 functions as the Proton donor in the catalytic mechanism. 300-306 (ATTGRKR) lines the substrate pocket. Residues Arg-306, 332–334 (KLD), and 415–417 (STG) each bind GTP.

The protein belongs to the adenylosuccinate synthetase family. As to quaternary structure, homodimer. Mg(2+) is required as a cofactor.

It is found in the cytoplasm. The enzyme catalyses IMP + L-aspartate + GTP = N(6)-(1,2-dicarboxyethyl)-AMP + GDP + phosphate + 2 H(+). It functions in the pathway purine metabolism; AMP biosynthesis via de novo pathway; AMP from IMP: step 1/2. Functionally, plays an important role in the de novo pathway of purine nucleotide biosynthesis. Catalyzes the first committed step in the biosynthesis of AMP from IMP. The polypeptide is Adenylosuccinate synthetase (Shewanella amazonensis (strain ATCC BAA-1098 / SB2B)).